The primary structure comprises 145 residues: D-aminoacyl-tRNA deacylase (145 aa).

The short motif at 137-138 (GP) is the Gly-cisPro motif, important for rejection of L-amino acids element.

It belongs to the DTD family. Homodimer.

The protein localises to the cytoplasm. The enzyme catalyses glycyl-tRNA(Ala) + H2O = tRNA(Ala) + glycine + H(+). It catalyses the reaction a D-aminoacyl-tRNA + H2O = a tRNA + a D-alpha-amino acid + H(+). An aminoacyl-tRNA editing enzyme that deacylates mischarged D-aminoacyl-tRNAs. Also deacylates mischarged glycyl-tRNA(Ala), protecting cells against glycine mischarging by AlaRS. Acts via tRNA-based rather than protein-based catalysis; rejects L-amino acids rather than detecting D-amino acids in the active site. By recycling D-aminoacyl-tRNA to D-amino acids and free tRNA molecules, this enzyme counteracts the toxicity associated with the formation of D-aminoacyl-tRNA entities in vivo and helps enforce protein L-homochirality. The chain is D-aminoacyl-tRNA deacylase from Yersinia pestis bv. Antiqua (strain Antiqua).